Here is a 475-residue protein sequence, read N- to C-terminus: Coagulation factor X (475 aa).

An N-terminal signal peptide occupies residues 1-20 (MAGRLLLLLLCAALPDELRA). A propeptide spanning residues 21 to 40 (EGGVFIKKESADKFLERTKR) is cleaved from the precursor. The Gla domain maps to 41–85 (ANSFLEEMKQGNIERECNEERCSKEEAREAFEDNEKTEEFWNIYV). 4-carboxyglutamate is present on residues Glu-46, Glu-47, Glu-54, Glu-56, Glu-59, Glu-60, Glu-65, Glu-66, Glu-69, Glu-72, and Glu-79. A disulfide bridge links Cys-57 with Cys-62. The region spanning 86-122 (DGDQCSSNPCHYGGQCKDGLGSYTCSCLDGYQGKNCE) is the EGF-like 1; calcium-binding domain. Cystine bridges form between Cys-90-Cys-101, Cys-95-Cys-110, Cys-112-Cys-121, Cys-129-Cys-140, Cys-136-Cys-152, Cys-154-Cys-167, Cys-175-Cys-348, Cys-247-Cys-252, Cys-267-Cys-283, Cys-396-Cys-410, and Cys-421-Cys-449. Asp-103 bears the (3R)-3-hydroxyaspartate mark. One can recognise an EGF-like 2 domain in the interval 125–168 (IPKYCKINNGDCEQFCSIKKSVQKDVVCSCTSGYELAEDGKQCV). Residues 186 to 240 (SVILPTNSNTNATSDQDVPSTNGSILEEVFTTTTESPTPPPRNGSSITDPNVDTR) constitute a propeptide, activation peptide. Asn-196, Asn-207, and Asn-228 each carry an N-linked (GlcNAc...) asparagine glycan. The disordered stretch occupies residues 216 to 237 (TTTTESPTPPPRNGSSITDPNV). One can recognise a Peptidase S1 domain in the interval 241-473 (IVGGDECRPG…FLRWVRTVMR (233 aa)). The Charge relay system role is filled by His-282. N-linked (GlcNAc...) asparagine glycosylation is present at Asn-285. Residue Asp-328 is the Charge relay system of the active site. Catalysis depends on Ser-425, which acts as the Charge relay system.

It belongs to the peptidase S1 family. In terms of assembly, the two chains are formed from a single-chain precursor by the excision of two Arg residues and are held together by 1 or more disulfide bonds. In terms of processing, the vitamin K-dependent, enzymatic carboxylation of some glutamate residues allows the modified protein to bind calcium. Post-translationally, the activation peptide is cleaved by factor IXa (in the intrinsic pathway), or by factor VIIa (in the extrinsic pathway). The iron and 2-oxoglutarate dependent 3-hydroxylation of aspartate and asparagine is (R) stereospecific within EGF domains. As to expression, liver and chorioallantoic membrane.

The protein localises to the secreted. The catalysed reaction is Selective cleavage of Arg-|-Thr and then Arg-|-Ile bonds in prothrombin to form thrombin.. Its function is as follows. Factor Xa is a vitamin K-dependent glycoprotein that converts prothrombin to thrombin in the presence of factor Va, calcium and phospholipid during blood clotting. VAP cleaves the fusion proteins of Sendai virus, NDV, and influenza virus a at a specific single arginine-containing site, and plays a key role in the viral spreading in the allantoic sac. The sequence is that of Coagulation factor X (F10) from Gallus gallus (Chicken).